Consider the following 309-residue polypeptide: Olfactory receptor-like protein OLF4 (309 aa).

Residues 1–25 (MELENDTRIPEFLLLGFSEEPKLQP) are Extracellular-facing. The N-linked (GlcNAc...) asparagine glycan is linked to Asn5. The chain crosses the membrane as a helical span at residues 26 to 49 (FLFGLFLSMYLVTILGNLLLILAV). At 50–57 (SSDSHLHT) the chain is on the cytoplasmic side. Residues 58-79 (PMYFFLANLSFVDICFTCTTIP) traverse the membrane as a helical segment. The Extracellular portion of the chain corresponds to 80–100 (KMLVNIQTQRKVITYESCIIQ). The helical transmembrane segment at 101 to 120 (MYFFELFAGIDNFLLTVMAY) threads the bilayer. At 121–139 (DRYMAICYPLHYMVIMNPQ) the chain is on the cytoplasmic side. The chain crosses the membrane as a helical span at residues 140 to 158 (LCSLLLLVSWIMSALHSLL). At 159–196 (QTLMVLRLSFCTHFQIPHFFCELNQMIQLACSDTFLNN) the chain is on the extracellular side. Residues 197-219 (MMLYFAAILLGVAPLVGVLYSYF) form a helical membrane-spanning segment. Residues 220–236 (KIVSSIRGISSAHSKYK) lie on the Cytoplasmic side of the membrane. The helical transmembrane segment at 237–260 (AFSTCASHLSVVSLFYCTSLGVYL) threads the bilayer. The Extracellular portion of the chain corresponds to 261–272 (SSAAPQSTHTSS). The helical transmembrane segment at 273–292 (VASVMYTVVTPMLNPFIYSL) threads the bilayer. Residues 293-309 (RNKDIKGALNVFFRGKP) are Cytoplasmic-facing.

Belongs to the G-protein coupled receptor 1 family.

It localises to the cell membrane. Its function is as follows. Putative odorant or sperm cell receptor. In Canis lupus familiaris (Dog), this protein is Olfactory receptor-like protein OLF4.